We begin with the raw amino-acid sequence, 1057 residues long: uncharacterized protein (1057 aa).

It belongs to the IIV-6 261R/396L/443R family.

This is an uncharacterized protein from Acheta domesticus (House cricket).